The sequence spans 1106 residues: Protein translocase subunit SecA (1106 aa).

ATP contacts are provided by residues Q175, 193-197 (GEGKT), and D694. The interval 1021–1106 (QEAPADEQQP…KYKNCHGQNA (86 aa)) is disordered. Positions 1042 to 1056 (QRQDMSKYREQKQDL) are enriched in basic and acidic residues. Polar residues predominate over residues 1057–1067 (SDPNQQAAASQ). Over residues 1068–1085 (DTREQQKREPIRAEKTVG) the composition is skewed to basic and acidic residues. C1090, C1092, C1101, and H1102 together coordinate Zn(2+).

This sequence belongs to the SecA family. In terms of assembly, monomer and homodimer. Part of the essential Sec protein translocation apparatus which comprises SecA, SecYEG and auxiliary proteins SecDF. Other proteins may also be involved. Zn(2+) is required as a cofactor.

Its subcellular location is the cell inner membrane. The protein resides in the cytoplasm. It catalyses the reaction ATP + H2O + cellular proteinSide 1 = ADP + phosphate + cellular proteinSide 2.. In terms of biological role, part of the Sec protein translocase complex. Interacts with the SecYEG preprotein conducting channel. Has a central role in coupling the hydrolysis of ATP to the transfer of proteins into and across the cell membrane, serving as an ATP-driven molecular motor driving the stepwise translocation of polypeptide chains across the membrane. The sequence is that of Protein translocase subunit SecA from Bacteroides thetaiotaomicron (strain ATCC 29148 / DSM 2079 / JCM 5827 / CCUG 10774 / NCTC 10582 / VPI-5482 / E50).